Reading from the N-terminus, the 527-residue chain is MDDITAPQTSAGSSSGTSTNTSGSRSFLPTFSNVGVGLKANVQGTLGGRQTTTTGNNIPKWATLDQANLQLWTGAGWRNDKTTSGSTGNANDTKFTSATGSGSGQGSSSGTNTSAGNPDGLQADKVDQNGQVKTSVQEATSGDNLTNYTNLPPANLTPTADWPNALSFTNKNNAQRAQLFLRGLLGSIPVLVNKSGQDDNSKFKAEDQKWSYTDLQSDQTKLNLPAYGEVNGLLNPALVETYFGNTRASGSGSNTTSSPGIGFKIPEQSGTNTTSKAVLITPGLAWTPQDVGNIVVSGTSFSFQLGGWLVTFTDFIKPRAGYLGLQLTGLDVSEATQRELIWAKRPWAAFRGSWVNRLGRVESVWDFKGVWADQAQLAAQAATSSTTTTATGATLPEHPNALAYQISYTDKDSYKASTQGSGQTNSQNNSPYLHFIKPKKVESTTQLDQGLKNLLDPNQVRTKLRQSFGTDHSTQPQPQSLKTTTPVFGRSSGNLSSVFSGGGAGGGSSGSGQSGVDLSPVERVSGH.

Disordered regions lie at residues 1–26, 76–148, 248–269, and 468–527; these read MDDI…GSRS, GWRN…LTNY, ASGS…PEQS, and FGTD…VSGH. Positions 9 to 26 are enriched in low complexity; it reads TSAGSSSGTSTNTSGSRS. The segment covering 82-95 has biased composition (polar residues); that stretch reads TTSGSTGNANDTKF. The span at 108 to 117 shows a compositional bias: low complexity; sequence SSGTNTSAGN. A compositionally biased stretch (polar residues) spans 128–148; it reads QNGQVKTSVQEATSGDNLTNY. Low complexity predominate over residues 248-262; it reads ASGSGSNTTSSPGIG. Residues 468–495 show a composition bias toward polar residues; it reads FGTDHSTQPQPQSLKTTTPVFGRSSGNL. Gly residues predominate over residues 500–513; sequence SGGGAGGGSSGSGQ.

It belongs to the adhesin P1 family.

The chain is Putative adhesin P1-like protein MPN_500 from Mycoplasma pneumoniae (strain ATCC 29342 / M129 / Subtype 1) (Mycoplasmoides pneumoniae).